The following is a 588-amino-acid chain: Disabled homolog 1 (588 aa).

The segment at 1-26 (MSTETELQVAVKTSAKKDSRKKGQDR) is disordered. The segment covering 15–26 (AKKDSRKKGQDR) has biased composition (basic and acidic residues). The PID domain maps to 36–189 (KGEGVRYKAK…CEQAVYQTIL (154 aa)). Residues Tyr198, Tyr220, and Tyr232 each carry the phosphotyrosine modification. 4 disordered regions span residues 224–243 (TSQK…NSQP), 420–444 (LATV…QKMG), 451–470 (FQMV…PSLT), and 502–588 (LTPV…QDGS). Residues 424–436 (PGTNDSARSSPQS) show a composition bias toward polar residues. 2 stretches are compositionally biased toward low complexity: residues 503–512 (TPVTSTTPST) and 523–534 (SSPSKSSASHVS). At Ser524 the chain carries Phosphoserine; by CDK5. Acidic residues predominate over residues 537 to 546 (TADDIFEEGF).

In terms of assembly, associates with the SH2 domains of SRC, FYN and ABL. Interacts (phosphorylated on tyrosine residues) with CRK and CRKL (via respective SH2 domain). Interacts with SIAH1, LRP8 and VLDLR. Interacts with LRP1. Interacts with APLP1 (via NPXY motif). Interacts with DAB2IP. Interacts with ZSWIM8. Post-translationally, phosphorylated by FYN on Tyr-198 and Tyr-220 upon reelin induction in embryonic neurons. Also found phosphorylated on Tyr-232 upon reelin induction. Also phosphorylated on Ser-524 independently of reelin signaling. In terms of processing, ubiquitinated by various cullin-5-RING E3 ubiquitin-protein ligase complexes (ECS complexes) following ligand-binding and phosphorylation, leading to its degradation. Ubiquitinated by the ECS(SOCS7) complex in the cortical plate of the developing cerebral cortex following ligand-binding and phosphorylation by FYN, leading to its degradation by the proteasome. Recognized by ZSWIM8 through a disorder targets misorder mechanism that eliminates misfolded DAB1 via ubiquitination and proteasomal degradation. As to expression, expressed mainly in brain. Specifically expressin in cortical neurons.

The protein resides in the cytoplasm. In terms of biological role, signaling adapter of the reelin-mediated signaling pathway, which regulates the migration and differentiation of postmitotic neurons during brain development. Mediates intracellular transduction of Reelin signaling following reelin (RELN)-binding to its receptor: acts by docking proteins through its phosphotyrosine residues and PID domain. This is Disabled homolog 1 from Mus musculus (Mouse).